A 211-amino-acid polypeptide reads, in one-letter code: Arginine exporter protein ArgO (211 aa).

The next 6 helical transmembrane spans lie at 1-21, 37-57, 68-88, 111-131, 147-167, and 179-199; these read MISY…PLGP, LMIA…GIFG, LLAL…FGAL, IIAT…DTFV, WFAL…ALLA, and AQRI…FQLA.

This sequence belongs to the LysE/ArgO transporter (TC 2.A.75) family.

Its subcellular location is the cell inner membrane. The enzyme catalyses L-arginine(in) = L-arginine(out). In terms of biological role, involved in the export of arginine. Important to control the intracellular level of arginine and the correct balance between arginine and lysine. The polypeptide is Arginine exporter protein ArgO (Salmonella typhimurium (strain LT2 / SGSC1412 / ATCC 700720)).